A 241-amino-acid polypeptide reads, in one-letter code: 1-(5-phosphoribosyl)-5-[(5-phosphoribosylamino)methylideneamino] imidazole-4-carboxamide isomerase (241 aa).

D8 acts as the Proton acceptor in catalysis. Catalysis depends on D130, which acts as the Proton donor.

It belongs to the HisA/HisF family.

The protein resides in the cytoplasm. It catalyses the reaction 1-(5-phospho-beta-D-ribosyl)-5-[(5-phospho-beta-D-ribosylamino)methylideneamino]imidazole-4-carboxamide = 5-[(5-phospho-1-deoxy-D-ribulos-1-ylimino)methylamino]-1-(5-phospho-beta-D-ribosyl)imidazole-4-carboxamide. The protein operates within amino-acid biosynthesis; L-histidine biosynthesis; L-histidine from 5-phospho-alpha-D-ribose 1-diphosphate: step 4/9. The polypeptide is 1-(5-phosphoribosyl)-5-[(5-phosphoribosylamino)methylideneamino] imidazole-4-carboxamide isomerase (Leptospira borgpetersenii serovar Hardjo-bovis (strain JB197)).